A 129-amino-acid polypeptide reads, in one-letter code: M-zodatoxin-Lt8k (129 aa).

The signal sequence occupies residues 1–20 (MKYFVVALALVAAFACIAES). Positions 21–60 (KPAESEHELAEVEEENELADLEDAVWLEHLADLSDLEEAR) are excised as a propeptide.

It belongs to the cationic peptide 06 (cytoinsectotoxin) family. Expressed by the venom gland.

Its subcellular location is the secreted. Its function is as follows. Insecticidal, cytolytic and antimicrobial peptide. Forms voltage-dependent, ion-permeable channels in membranes. At high concentration causes cell membrane lysis. The protein is M-zodatoxin-Lt8k (cit 1-10) of Lachesana tarabaevi (Spider).